The following is a 430-amino-acid chain: Asparagine--tRNA ligase (430 aa).

It belongs to the class-II aminoacyl-tRNA synthetase family. Homodimer.

Its subcellular location is the cytoplasm. The enzyme catalyses tRNA(Asn) + L-asparagine + ATP = L-asparaginyl-tRNA(Asn) + AMP + diphosphate + H(+). In Staphylococcus aureus (strain JH1), this protein is Asparagine--tRNA ligase.